The chain runs to 78 residues: DNA-directed RNA polymerase subunit Rpo5 (78 aa).

The protein belongs to the archaeal Rpo5/eukaryotic RPB5 RNA polymerase subunit family. In terms of assembly, part of the RNA polymerase complex.

It is found in the cytoplasm. The enzyme catalyses RNA(n) + a ribonucleoside 5'-triphosphate = RNA(n+1) + diphosphate. Functionally, DNA-dependent RNA polymerase (RNAP) catalyzes the transcription of DNA into RNA using the four ribonucleoside triphosphates as substrates. The protein is DNA-directed RNA polymerase subunit Rpo5 of Methanothrix thermoacetophila (strain DSM 6194 / JCM 14653 / NBRC 101360 / PT) (Methanosaeta thermophila).